Here is a 202-residue protein sequence, read N- to C-terminus: Probable WRKY transcription factor 59 (202 aa).

The segment at residues 103-168 (DEKVALDDGY…YEGRHNHPSP (66 aa)) is a DNA-binding region (WRKY).

This sequence belongs to the WRKY group II-c family.

Its subcellular location is the nucleus. Its function is as follows. Transcription factor. Interacts specifically with the W box (5'-(T)TGAC[CT]-3'), a frequently occurring elicitor-responsive cis-acting element. The polypeptide is Probable WRKY transcription factor 59 (WRKY59) (Arabidopsis thaliana (Mouse-ear cress)).